Reading from the N-terminus, the 196-residue chain is ATP-dependent Clp protease proteolytic subunit (196 aa).

Ser101 functions as the Nucleophile in the catalytic mechanism. His126 is a catalytic residue.

The protein belongs to the peptidase S14 family. As to quaternary structure, component of the chloroplastic Clp protease core complex.

The protein resides in the plastid. Its subcellular location is the chloroplast stroma. The catalysed reaction is Hydrolysis of proteins to small peptides in the presence of ATP and magnesium. alpha-casein is the usual test substrate. In the absence of ATP, only oligopeptides shorter than five residues are hydrolyzed (such as succinyl-Leu-Tyr-|-NHMec, and Leu-Tyr-Leu-|-Tyr-Trp, in which cleavage of the -Tyr-|-Leu- and -Tyr-|-Trp bonds also occurs).. Its function is as follows. Cleaves peptides in various proteins in a process that requires ATP hydrolysis. Has a chymotrypsin-like activity. Plays a major role in the degradation of misfolded proteins. This Aethionema cordifolium (Lebanon stonecress) protein is ATP-dependent Clp protease proteolytic subunit.